A 133-amino-acid chain; its full sequence is UPF0768 protein C977.18 (133 aa).

It belongs to the UPF0768 family.

This Schizosaccharomyces pombe (strain 972 / ATCC 24843) (Fission yeast) protein is UPF0768 protein C977.18.